Reading from the N-terminus, the 282-residue chain is Bifunctional protein FolD (282 aa).

Residues 166-168 and Ser-191 contribute to the NADP(+) site; that span reads GRS.

This sequence belongs to the tetrahydrofolate dehydrogenase/cyclohydrolase family. In terms of assembly, homodimer.

It carries out the reaction (6R)-5,10-methylene-5,6,7,8-tetrahydrofolate + NADP(+) = (6R)-5,10-methenyltetrahydrofolate + NADPH. It catalyses the reaction (6R)-5,10-methenyltetrahydrofolate + H2O = (6R)-10-formyltetrahydrofolate + H(+). It participates in one-carbon metabolism; tetrahydrofolate interconversion. Functionally, catalyzes the oxidation of 5,10-methylenetetrahydrofolate to 5,10-methenyltetrahydrofolate and then the hydrolysis of 5,10-methenyltetrahydrofolate to 10-formyltetrahydrofolate. This is Bifunctional protein FolD from Acidovorax sp. (strain JS42).